A 54-amino-acid chain; its full sequence is uncharacterized protein (54 aa).

Basic and acidic residues predominate over residues 23 to 35 (DVMQEGETAKELN). The disordered stretch occupies residues 23 to 54 (DVMQEGETAKELNYEGEDMQATSSAQNRQTSV). Residues 42-54 (QATSSAQNRQTSV) are compositionally biased toward polar residues.

This is an uncharacterized protein from Bacillus subtilis (strain 168).